We begin with the raw amino-acid sequence, 524 residues long: 2-isopropylmalate synthase (524 aa).

One can recognise a Pyruvate carboxyltransferase domain in the interval 5-267; that stretch reads VIIFDTTLRD…HTNIRHSEIH (263 aa). The Mn(2+) site is built by Asp14, His202, His204, and Asn238. The regulatory domain stretch occupies residues 392–524; sequence KLEYLGVQSG…KTDKINTESV (133 aa).

Belongs to the alpha-IPM synthase/homocitrate synthase family. LeuA type 1 subfamily. As to quaternary structure, homodimer. Mn(2+) is required as a cofactor.

The protein localises to the cytoplasm. The catalysed reaction is 3-methyl-2-oxobutanoate + acetyl-CoA + H2O = (2S)-2-isopropylmalate + CoA + H(+). Its pathway is amino-acid biosynthesis; L-leucine biosynthesis; L-leucine from 3-methyl-2-oxobutanoate: step 1/4. Catalyzes the condensation of the acetyl group of acetyl-CoA with 3-methyl-2-oxobutanoate (2-ketoisovalerate) to form 3-carboxy-3-hydroxy-4-methylpentanoate (2-isopropylmalate). In Aeromonas hydrophila subsp. hydrophila (strain ATCC 7966 / DSM 30187 / BCRC 13018 / CCUG 14551 / JCM 1027 / KCTC 2358 / NCIMB 9240 / NCTC 8049), this protein is 2-isopropylmalate synthase.